Consider the following 362-residue polypeptide: Probable dual-specificity RNA methyltransferase RlmN (362 aa).

The Proton acceptor role is filled by Glu91. One can recognise a Radical SAM core domain in the interval 97–329 (QHYGLSVCVT…KKNGVNCVVR (233 aa)). Cys104 and Cys340 are disulfide-bonded. Residues Cys111, Cys115, and Cys118 each coordinate [4Fe-4S] cluster. S-adenosyl-L-methionine contacts are provided by residues 163–164 (GE), Ser195, 218–220 (SLH), and Asn296. Cys340 serves as the catalytic S-methylcysteine intermediate.

The protein belongs to the radical SAM superfamily. RlmN family. [4Fe-4S] cluster serves as cofactor.

The protein localises to the cytoplasm. It carries out the reaction adenosine(2503) in 23S rRNA + 2 reduced [2Fe-2S]-[ferredoxin] + 2 S-adenosyl-L-methionine = 2-methyladenosine(2503) in 23S rRNA + 5'-deoxyadenosine + L-methionine + 2 oxidized [2Fe-2S]-[ferredoxin] + S-adenosyl-L-homocysteine. The enzyme catalyses adenosine(37) in tRNA + 2 reduced [2Fe-2S]-[ferredoxin] + 2 S-adenosyl-L-methionine = 2-methyladenosine(37) in tRNA + 5'-deoxyadenosine + L-methionine + 2 oxidized [2Fe-2S]-[ferredoxin] + S-adenosyl-L-homocysteine. In terms of biological role, specifically methylates position 2 of adenine 2503 in 23S rRNA and position 2 of adenine 37 in tRNAs. The chain is Probable dual-specificity RNA methyltransferase RlmN from Streptococcus gordonii (strain Challis / ATCC 35105 / BCRC 15272 / CH1 / DL1 / V288).